Reading from the N-terminus, the 292-residue chain is MQFTGAFTAIVTPFRNGRVDEERFRELIEWQIEQGINGLVPCGTTGESATLSHDEHRDVIRICVEQVKGRIPVLAGAGSNNTREAIDLTRFAKEAGADGALLITPYYNKPTQEGLYLHFKAIASEVSMPFIVYNVPSRTGTNICPETLARLNRDIPEVVGVKEATGNLIQVSEILEYCGTDFQVLSGDDFTVLPLLSVGGCGVISVTSNVVPAKMSDMCRAFKAGDLATARRLHFELSPINRAMFLETNPIPVKTALALMGRIDLEMRLPLCPLQQVNQSRLRDILAAAGIL.

Pyruvate is bound at residue Thr45. Tyr133 serves as the catalytic Proton donor/acceptor. The active-site Schiff-base intermediate with substrate is Lys162. Residue Ile204 coordinates pyruvate.

It belongs to the DapA family. As to quaternary structure, homotetramer; dimer of dimers.

It is found in the cytoplasm. It carries out the reaction L-aspartate 4-semialdehyde + pyruvate = (2S,4S)-4-hydroxy-2,3,4,5-tetrahydrodipicolinate + H2O + H(+). It participates in amino-acid biosynthesis; L-lysine biosynthesis via DAP pathway; (S)-tetrahydrodipicolinate from L-aspartate: step 3/4. Catalyzes the condensation of (S)-aspartate-beta-semialdehyde [(S)-ASA] and pyruvate to 4-hydroxy-tetrahydrodipicolinate (HTPA). This Nitratidesulfovibrio vulgaris (strain ATCC 29579 / DSM 644 / CCUG 34227 / NCIMB 8303 / VKM B-1760 / Hildenborough) (Desulfovibrio vulgaris) protein is 4-hydroxy-tetrahydrodipicolinate synthase.